The following is a 294-amino-acid chain: Nucleotide-binding protein Dde_1774 (294 aa).

14-21 (GLSGAGKS) contributes to the ATP binding site. Position 66–69 (66–69 (DLRQ)) interacts with GTP.

It belongs to the RapZ-like family.

Functionally, displays ATPase and GTPase activities. The polypeptide is Nucleotide-binding protein Dde_1774 (Oleidesulfovibrio alaskensis (strain ATCC BAA-1058 / DSM 17464 / G20) (Desulfovibrio alaskensis)).